We begin with the raw amino-acid sequence, 492 residues long: GTPase Der (492 aa).

EngA-type G domains are found at residues 3-167 and 201-381; these read FTLA…DAYA and LQVA…EVWN. Residues 9 to 16, 56 to 60, 119 to 122, 207 to 214, 259 to 263, and 324 to 327 contribute to the GTP site; these read GRPNVGKS, DTAGL, NKAE, GRPNAGKS, DTAGM, and NKWD. In terms of domain architecture, KH-like spans 382–468; sequence RRVTTAQLNR…RLWMRGQNDA (87 aa). Positions 462-492 are disordered; sequence MRGQNDANPYKGRKKAPPSKLRKHTDGRRKD. Positions 472–492 are enriched in basic residues; it reads KGRKKAPPSKLRKHTDGRRKD.

Belongs to the TRAFAC class TrmE-Era-EngA-EngB-Septin-like GTPase superfamily. EngA (Der) GTPase family. In terms of assembly, associates with the 50S ribosomal subunit.

Its function is as follows. GTPase that plays an essential role in the late steps of ribosome biogenesis. The sequence is that of GTPase Der from Roseobacter denitrificans (strain ATCC 33942 / OCh 114) (Erythrobacter sp. (strain OCh 114)).